Consider the following 503-residue polypeptide: Plant-specific TFIIB-related protein 1 (503 aa).

The segment at methionine 1–glutamate 33 adopts a TFIIB-type zinc-finger fold. 4 disordered regions span residues proline 328 to isoleucine 366, asparagine 411 to lysine 431, isoleucine 436 to serine 455, and glycine 468 to phenylalanine 503. A compositionally biased stretch (low complexity) spans proline 333–arginine 346. Residues phenylalanine 355–isoleucine 366 show a composition bias toward basic and acidic residues.

Post-translationally, ubiquinated. Subsequent degradation by the proteasome pathway. As to expression, widely expressed.

It is found in the plastid. Its subcellular location is the chloroplast outer membrane. The protein resides in the nucleus. Plant-specific TFIIB-related protein that may be involved in an intracellular signaling pathway between plastids and the nucleus. May act as general transcription factor (GTF) of RNA polymerase I-dependent transcription and rRNA synthesis. Forms a ternary complex with TBP2 and the rDNA promoter region. This Arabidopsis thaliana (Mouse-ear cress) protein is Plant-specific TFIIB-related protein 1.